The primary structure comprises 398 residues: 4-hydroxy-3-methylbut-2-enyl diphosphate reductase (398 aa).

Residue Cys-66 coordinates [4Fe-4S] cluster. Residue His-96 participates in (2E)-4-hydroxy-3-methylbut-2-enyl diphosphate binding. Position 96 (His-96) interacts with dimethylallyl diphosphate. Residue His-96 coordinates isopentenyl diphosphate. [4Fe-4S] cluster is bound at residue Cys-157. His-185 serves as a coordination point for (2E)-4-hydroxy-3-methylbut-2-enyl diphosphate. His-185 lines the dimethylallyl diphosphate pocket. His-185 serves as a coordination point for isopentenyl diphosphate. Glu-187 functions as the Proton donor in the catalytic mechanism. Thr-250 contributes to the (2E)-4-hydroxy-3-methylbut-2-enyl diphosphate binding site. Cys-288 is a [4Fe-4S] cluster binding site. 4 residues coordinate (2E)-4-hydroxy-3-methylbut-2-enyl diphosphate: Ser-317, Ser-318, Asn-319, and Ser-380. The dimethylallyl diphosphate site is built by Ser-317, Ser-318, Asn-319, and Ser-380. Residues Ser-317, Ser-318, Asn-319, and Ser-380 each coordinate isopentenyl diphosphate.

This sequence belongs to the IspH family. It depends on [4Fe-4S] cluster as a cofactor.

It carries out the reaction isopentenyl diphosphate + 2 oxidized [2Fe-2S]-[ferredoxin] + H2O = (2E)-4-hydroxy-3-methylbut-2-enyl diphosphate + 2 reduced [2Fe-2S]-[ferredoxin] + 2 H(+). The enzyme catalyses dimethylallyl diphosphate + 2 oxidized [2Fe-2S]-[ferredoxin] + H2O = (2E)-4-hydroxy-3-methylbut-2-enyl diphosphate + 2 reduced [2Fe-2S]-[ferredoxin] + 2 H(+). The protein operates within isoprenoid biosynthesis; dimethylallyl diphosphate biosynthesis; dimethylallyl diphosphate from (2E)-4-hydroxy-3-methylbutenyl diphosphate: step 1/1. It participates in isoprenoid biosynthesis; isopentenyl diphosphate biosynthesis via DXP pathway; isopentenyl diphosphate from 1-deoxy-D-xylulose 5-phosphate: step 6/6. Its function is as follows. Catalyzes the conversion of 1-hydroxy-2-methyl-2-(E)-butenyl 4-diphosphate (HMBPP) into a mixture of isopentenyl diphosphate (IPP) and dimethylallyl diphosphate (DMAPP). Acts in the terminal step of the DOXP/MEP pathway for isoprenoid precursor biosynthesis. The chain is 4-hydroxy-3-methylbut-2-enyl diphosphate reductase from Prochlorococcus marinus (strain AS9601).